The chain runs to 101 residues: NADH-quinone oxidoreductase subunit K (101 aa).

Transmembrane regions (helical) follow at residues 4–24 (LGHL…GIFL), 30–50 (IVLL…FIAF), and 62–82 (FVFF…AILV).

It belongs to the complex I subunit 4L family. NDH-1 is composed of 14 different subunits. Subunits NuoA, H, J, K, L, M, N constitute the membrane sector of the complex.

The protein resides in the cell inner membrane. It carries out the reaction a quinone + NADH + 5 H(+)(in) = a quinol + NAD(+) + 4 H(+)(out). Its function is as follows. NDH-1 shuttles electrons from NADH, via FMN and iron-sulfur (Fe-S) centers, to quinones in the respiratory chain. The immediate electron acceptor for the enzyme in this species is believed to be ubiquinone. Couples the redox reaction to proton translocation (for every two electrons transferred, four hydrogen ions are translocated across the cytoplasmic membrane), and thus conserves the redox energy in a proton gradient. The sequence is that of NADH-quinone oxidoreductase subunit K from Xylella fastidiosa (strain Temecula1 / ATCC 700964).